We begin with the raw amino-acid sequence, 274 residues long: NADPH-dependent 7-cyano-7-deazaguanine reductase (274 aa).

80–82 provides a ligand contact to substrate; it reads VES. Residue 82–83 participates in NADPH binding; that stretch reads SK. Residue Cys-181 is the Thioimide intermediate of the active site. The active-site Proton donor is Asp-188. 220 to 221 is a substrate binding site; it reads HE. Position 249–250 (249–250) interacts with NADPH; the sequence is RG.

Belongs to the GTP cyclohydrolase I family. QueF type 2 subfamily. Homodimer.

It localises to the cytoplasm. The enzyme catalyses 7-aminomethyl-7-carbaguanine + 2 NADP(+) = 7-cyano-7-deazaguanine + 2 NADPH + 3 H(+). It functions in the pathway tRNA modification; tRNA-queuosine biosynthesis. In terms of biological role, catalyzes the NADPH-dependent reduction of 7-cyano-7-deazaguanine (preQ0) to 7-aminomethyl-7-deazaguanine (preQ1). This chain is NADPH-dependent 7-cyano-7-deazaguanine reductase, found in Burkholderia thailandensis (strain ATCC 700388 / DSM 13276 / CCUG 48851 / CIP 106301 / E264).